The following is a 112-amino-acid chain: MEGTDWSGWGDDSDFPWPKGSRVTFPSYQLEDPPYAAPSDLDLVGKGHLHIAFVILIVSLFVLLLGVLLACHFLRRSLSPISVSSRCSPCRLFYDRCRPYTSLEKGVELSCV.

Over residues 1–10 the composition is skewed to low complexity; the sequence is MEGTDWSGWG. A disordered region spans residues 1–20; that stretch reads MEGTDWSGWGDDSDFPWPKG. The helical transmembrane segment at 51–71 threads the bilayer; it reads IAFVILIVSLFVLLLGVLLAC.

The protein resides in the host membrane. This is Protein ORF1 from Snake adenovirus serotype 1 (SnAdV-1).